A 346-amino-acid polypeptide reads, in one-letter code: uncharacterized protein (346 aa).

A helical membrane pass occupies residues 7 to 27 (AMVILLIICGTYVLFIQYGSV). The segment at 29–48 (EKKSNDSEPQVSNEEAQSGK) is disordered. Residues 35–44 (SEPQVSNEEA) are compositionally biased toward polar residues. An SCP domain is found at 231–342 (LDLTNVIRVK…VDRKYYTQNF (112 aa)).

The protein localises to the cell membrane. This is an uncharacterized protein from Bacillus subtilis (strain 168).